A 273-amino-acid chain; its full sequence is Undecaprenyl-diphosphatase (273 aa).

A run of 8 helical transmembrane segments spans residues 18–40 (GLTEFLPVSSTGHMILVGSLLGF), 45–65 (AKTFEVIIQLGSILAVVVVFW), 92–112 (GHILLGMIPAVVLGLVFHEQI), 114–134 (AIFAPIYVMYALVVGGVLLLA), 151–171 (LTYLQAFLIGCFQCLALWPGF), 189–209 (YAASEFSFILAVPMMLGATVL), 225–245 (MFAIGFVTAFVVALLAIKFFL), and 253–273 (FVPFAIYRFILAVVVYWILIG).

Belongs to the UppP family.

It is found in the cell inner membrane. It carries out the reaction di-trans,octa-cis-undecaprenyl diphosphate + H2O = di-trans,octa-cis-undecaprenyl phosphate + phosphate + H(+). Catalyzes the dephosphorylation of undecaprenyl diphosphate (UPP). Confers resistance to bacitracin. This is Undecaprenyl-diphosphatase from Sodalis glossinidius (strain morsitans).